We begin with the raw amino-acid sequence, 476 residues long: Chromosomal replication initiator protein DnaA (476 aa).

The segment at 1–87 (MSESSHVGLW…LMYNVLVDKS (87 aa)) is domain I, interacts with DnaA modulators. A domain II region spans residues 87–130 (SSGATVNQESTTRSTAIPQSGLPRVDERKAPGLLRAPAVQDLDP). The domain III, AAA+ region stretch occupies residues 131-348 (HLNPNYNFET…GIVISIMAHS (218 aa)). ATP-binding residues include G176, G178, K179, and T180. The segment at 349 to 476 (TIYNKEIDLD…KKRNVSNGER (128 aa)) is domain IV, binds dsDNA.

This sequence belongs to the DnaA family. As to quaternary structure, oligomerizes as a right-handed, spiral filament on DNA at oriC.

The protein resides in the cytoplasm. Plays an essential role in the initiation and regulation of chromosomal replication. ATP-DnaA binds to the origin of replication (oriC) to initiate formation of the DNA replication initiation complex once per cell cycle. Binds the DnaA box (a 9 base pair repeat at the origin) and separates the double-stranded (ds)DNA. Forms a right-handed helical filament on oriC DNA; dsDNA binds to the exterior of the filament while single-stranded (ss)DNA is stabiized in the filament's interior. The ATP-DnaA-oriC complex binds and stabilizes one strand of the AT-rich DNA unwinding element (DUE), permitting loading of DNA polymerase. After initiation quickly degrades to an ADP-DnaA complex that is not apt for DNA replication. Binds acidic phospholipids. The chain is Chromosomal replication initiator protein DnaA from Bacteroides fragilis (strain YCH46).